We begin with the raw amino-acid sequence, 251 residues long: 2,3-bisphosphoglycerate-dependent phosphoglycerate mutase 2 (251 aa).

Residues 8–15 (RHGESTWN), 21–22 (TG), R60, 87–90 (ERHY), K98, 114–115 (RR), and 183–184 (GN) contribute to the substrate site. H9 acts as the Tele-phosphohistidine intermediate in catalysis. The active-site Proton donor/acceptor is the E87.

Belongs to the phosphoglycerate mutase family. BPG-dependent PGAM subfamily. In terms of assembly, homodimer.

It carries out the reaction (2R)-2-phosphoglycerate = (2R)-3-phosphoglycerate. The protein operates within carbohydrate degradation; glycolysis; pyruvate from D-glyceraldehyde 3-phosphate: step 3/5. Functionally, catalyzes the interconversion of 2-phosphoglycerate and 3-phosphoglycerate. This is 2,3-bisphosphoglycerate-dependent phosphoglycerate mutase 2 from Nitrosospira multiformis (strain ATCC 25196 / NCIMB 11849 / C 71).